The primary structure comprises 353 residues: Holliday junction branch migration complex subunit RuvB (353 aa).

Positions 4 to 185 (ADRLITAAGG…FGIVQRLEFY (182 aa)) are large ATPase domain (RuvB-L). ATP-binding positions include Ile24, Arg25, Gly66, Lys69, Thr70, Thr71, 132 to 134 (EDF), Arg175, Tyr185, and Arg222. Thr70 serves as a coordination point for Mg(2+). The segment at 186-256 (NIADLSTIVS…TADKALNLLD (71 aa)) is small ATPAse domain (RuvB-S). Residues 259–353 (EHGFDHQDRR…DDVVDDPADL (95 aa)) are head domain (RuvB-H). Positions 295, 314, and 319 each coordinate DNA.

Belongs to the RuvB family. In terms of assembly, homohexamer. Forms an RuvA(8)-RuvB(12)-Holliday junction (HJ) complex. HJ DNA is sandwiched between 2 RuvA tetramers; dsDNA enters through RuvA and exits via RuvB. An RuvB hexamer assembles on each DNA strand where it exits the tetramer. Each RuvB hexamer is contacted by two RuvA subunits (via domain III) on 2 adjacent RuvB subunits; this complex drives branch migration. In the full resolvosome a probable DNA-RuvA(4)-RuvB(12)-RuvC(2) complex forms which resolves the HJ.

It localises to the cytoplasm. The catalysed reaction is ATP + H2O = ADP + phosphate + H(+). The RuvA-RuvB-RuvC complex processes Holliday junction (HJ) DNA during genetic recombination and DNA repair, while the RuvA-RuvB complex plays an important role in the rescue of blocked DNA replication forks via replication fork reversal (RFR). RuvA specifically binds to HJ cruciform DNA, conferring on it an open structure. The RuvB hexamer acts as an ATP-dependent pump, pulling dsDNA into and through the RuvAB complex. RuvB forms 2 homohexamers on either side of HJ DNA bound by 1 or 2 RuvA tetramers; 4 subunits per hexamer contact DNA at a time. Coordinated motions by a converter formed by DNA-disengaged RuvB subunits stimulates ATP hydrolysis and nucleotide exchange. Immobilization of the converter enables RuvB to convert the ATP-contained energy into a lever motion, pulling 2 nucleotides of DNA out of the RuvA tetramer per ATP hydrolyzed, thus driving DNA branch migration. The RuvB motors rotate together with the DNA substrate, which together with the progressing nucleotide cycle form the mechanistic basis for DNA recombination by continuous HJ branch migration. Branch migration allows RuvC to scan DNA until it finds its consensus sequence, where it cleaves and resolves cruciform DNA. The polypeptide is Holliday junction branch migration complex subunit RuvB (Pseudomonas savastanoi pv. phaseolicola (strain 1448A / Race 6) (Pseudomonas syringae pv. phaseolicola (strain 1448A / Race 6))).